The chain runs to 581 residues: Kelch-like protein 30 (581 aa).

The region spanning 33 to 100 (ADVTLLVGDQ…VYTGRLTITQ (68 aa)) is the BTB domain. Residues 135-237 (CLGICEFGEQ…PRPCVQQLLA (103 aa)) enclose the BACK domain. Kelch repeat units follow at residues 280 to 327 (EEDE…ALNS), 328 to 378 (DVYV…ALNG), 379 to 423 (EIYA…GCQG), 425 to 472 (LYLV…ALNG), 474 to 514 (LYLI…PLGD), and 515 to 564 (LLYV…TIFL).

In Mus musculus (Mouse), this protein is Kelch-like protein 30 (Klhl30).